The chain runs to 613 residues: DNA mismatch repair protein MutL (613 aa).

It belongs to the DNA mismatch repair MutL/HexB family.

In terms of biological role, this protein is involved in the repair of mismatches in DNA. It is required for dam-dependent methyl-directed DNA mismatch repair. May act as a 'molecular matchmaker', a protein that promotes the formation of a stable complex between two or more DNA-binding proteins in an ATP-dependent manner without itself being part of a final effector complex. This Bradyrhizobium sp. (strain ORS 278) protein is DNA mismatch repair protein MutL.